The following is a 308-amino-acid chain: MNPIVVVHGGGAGPISKDRKERVHQGMVRAATVGYGILREGGSAVDAVEGAVVALEDDPEFNAGCGSVLNTNGEVEMDASIMDGKDLSAGAVSAVQCIANPIKLARLVMEKTPHCFLTDQGAAQFAAAMGVPEIPGEKLVTERNKKRLEKEKHEKGAQKTDCQKNLGTVGAVALDCKGNVAYATSTGGIVNKMVGRVGDSPCLGAGGYADNDIGAVSTTGHGESILKVNLARLTLFHIEQGKTVEEAADLSLGYMKSRVKGLGGLIVVSKTGDWVAKWTSTSMPWAAAKDGKLHFGIDPDDTTITDLP.

Position 1 is an N-acetylmethionine (methionine 1). The Nucleophile role is filled by threonine 168. Substrate contacts are provided by residues 196-199 (RVGD) and 219-222 (TGHG).

The protein belongs to the Ntn-hydrolase family. Heterodimer of an alpha and beta chain produced by autocleavage. This heterodimer may then dimerize in turn, giving rise to a heterotetramer. In terms of processing, cleaved into an alpha and beta chain by autocatalysis; this activates the enzyme. The N-terminal residue of the beta subunit is responsible for the nucleophile hydrolase activity. In terms of tissue distribution, expressed in brain, kidney, testis and tissues of the gastrointestinal tract. Present in sperm (at protein level). Over-expressed in uterine, mammary, prostatic and ovarian carcinoma.

Its subcellular location is the cytoplasm. The enzyme catalyses L-asparagine + H2O = L-aspartate + NH4(+). The catalysed reaction is Cleavage of a beta-linked Asp residue from the N-terminus of a polypeptide.. With respect to regulation, glycine accelerates autocleavage into an alpha and beta chain. Its function is as follows. Has both L-asparaginase and beta-aspartyl peptidase activity. May be involved in the production of L-aspartate, which can act as an excitatory neurotransmitter in some brain regions. Is highly active with L-Asp beta-methyl ester. Besides, has catalytic activity toward beta-aspartyl dipeptides and their methyl esters, including beta-L-Asp-L-Phe, beta-L-Asp-L-Phe methyl ester (aspartame), beta-L-Asp-L-Ala, beta-L-Asp-L-Leu and beta-L-Asp-L-Lys. Does not have aspartylglucosaminidase activity and is inactive toward GlcNAc-L-Asn. Likewise, has no activity toward glutamine. The polypeptide is Isoaspartyl peptidase/L-asparaginase (ASRGL1) (Homo sapiens (Human)).